A 358-amino-acid polypeptide reads, in one-letter code: MSNLNLFETNQNKSISIMTQDITKLLDPLTEKFDGFSIKTLNVKHVDEIHELLNKHYIEDNDHIIRIIYSRDFLYWYLKYVPNNFTIGLMYKNKLVGLITALFVDMIMYDNKIKIPYINFFCIQNKIRKFGLSNILIEELKSRLLKIGVAYSLFTRMNCQNSLDKHFTSTIDFAIPINCPKLKSVGFIPDDEKLMNWKIENNPLSLMVKTDILSVTSKLNVHLQHLSVRPYLTEDSVHHFILPKKNIVYTFVKRDSRGYVTDMVSVYKHYAYILETGKIISNAQLSFYYNETMDLTQLILLLLDKLINYGFDQLIFRNFYDNGKINITRFETNGELNYYAGNISMPITCPNNMFMIPI.

Belongs to the NMT family.

It carries out the reaction N-terminal glycyl-[protein] + tetradecanoyl-CoA = N-tetradecanoylglycyl-[protein] + CoA + H(+). Its function is as follows. Adds a myristoyl group to the N-terminal glycine residue of certain proteins. The protein is Putative glycylpeptide N-tetradecanoyltransferase of Acanthamoeba polyphaga (Amoeba).